The following is a 335-amino-acid chain: NADH-quinone oxidoreductase subunit H (335 aa).

The next 8 helical transmembrane spans lie at 11-31 (VILT…AGAL), 81-101 (VIFT…FAII), 114-134 (IGLL…LFAG), 154-174 (VSYE…VGSF), 187-207 (LWFI…GVAV), 238-258 (FFVG…TLFF), 270-290 (QLSF…FILL), and 307-327 (WKFC…IVLW).

It belongs to the complex I subunit 1 family. As to quaternary structure, NDH-1 is composed of 13 different subunits. Subunits NuoA, H, J, K, L, M, N constitute the membrane sector of the complex.

It is found in the cell inner membrane. The catalysed reaction is a quinone + NADH + 5 H(+)(in) = a quinol + NAD(+) + 4 H(+)(out). NDH-1 shuttles electrons from NADH, via FMN and iron-sulfur (Fe-S) centers, to quinones in the respiratory chain. The immediate electron acceptor for the enzyme in this species is believed to be ubiquinone. Couples the redox reaction to proton translocation (for every two electrons transferred, four hydrogen ions are translocated across the cytoplasmic membrane), and thus conserves the redox energy in a proton gradient. This subunit may bind ubiquinone. The polypeptide is NADH-quinone oxidoreductase subunit H (Pseudomonas fluorescens (strain Pf0-1)).